The chain runs to 396 residues: Ribosomal RNA large subunit methyltransferase I (396 aa).

The region spanning 2–81 (SVRLVLAKGR…ESIDIAFFSR (80 aa)) is the PUA domain.

Belongs to the methyltransferase superfamily. RlmI family.

The protein resides in the cytoplasm. The enzyme catalyses cytidine(1962) in 23S rRNA + S-adenosyl-L-methionine = 5-methylcytidine(1962) in 23S rRNA + S-adenosyl-L-homocysteine + H(+). Specifically methylates the cytosine at position 1962 (m5C1962) of 23S rRNA. The polypeptide is Ribosomal RNA large subunit methyltransferase I (Shigella boydii serotype 18 (strain CDC 3083-94 / BS512)).